Here is a 262-residue protein sequence, read N- to C-terminus: Small ribosomal subunit protein eS1 (262 aa).

This sequence belongs to the eukaryotic ribosomal protein eS1 family. In terms of assembly, component of the small ribosomal subunit. Mature ribosomes consist of a small (40S) and a large (60S) subunit. The 40S subunit contains about 33 different proteins and 1 molecule of RNA (18S). The 60S subunit contains about 49 different proteins and 3 molecules of RNA (25S, 5.8S and 5S).

Its subcellular location is the cytoplasm. The polypeptide is Small ribosomal subunit protein eS1 (Brassica campestris (Field mustard)).